Here is a 437-residue protein sequence, read N- to C-terminus: Vasoactive intestinal polypeptide receptor 2 (437 aa).

Positions 1–22 (MRASVVLTCYCWLLVRVSSIHP) are cleaved as a signal peptide. Residues 23–123 (ECRFHLEIQE…EDESKISFYI (101 aa)) are Extracellular-facing. 3 disulfide bridges follow: Cys37–Cys60, Cys51–Cys92, and Cys74–Cys108. N-linked (GlcNAc...) asparagine glycosylation is found at Asn57, Asn87, and Asn91. The chain crosses the membrane as a helical span at residues 124 to 149 (LVKAIYTLGYSVSLMSLTTGSIIICL). Over 150–157 (FRKLHCTR) the chain is Cytoplasmic. The chain crosses the membrane as a helical span at residues 158–179 (NYIHLNLFLSFMLRAISVLVKD). Residues 180–202 (SVLYSSSGLLRCHDQPASWVGCK) are Extracellular-facing. An intrachain disulfide couples Cys201 to Cys270. Residues 203–227 (LSLVFFQYCIMANFYWLLVEGLYLH) traverse the membrane as a helical segment. Residues 228–238 (TLLVAILPPSR) are Cytoplasmic-facing. Residues 239-260 (CFLAYLLIGWGIPSVCIGAWTA) form a helical membrane-spanning segment. Residues 261 to 279 (TRLSLEDTGCWDTNDHSIP) lie on the Extracellular side of the membrane. Residues 280–303 (WWVIRMPILISIVVNFALFISIVR) form a helical membrane-spanning segment. At 304-324 (ILLQKLTSPDVGGNDQSQYKR) the chain is on the cytoplasmic side. A helical membrane pass occupies residues 325-345 (LAKSTLLLIPLFGVHYMVFAA). Topologically, residues 346-353 (FPIGISST) are extracellular. Residues 354–377 (YQILFELCVGSFQGLVVAVLYCFL) form a helical membrane-spanning segment. At 378–437 (NSEVQCELKRRWRGLCLTQAGSRDYRLHSWSMSRNGSESALQIHRGSRTQSFLQSETSVI) the chain is on the cytoplasmic side.

Belongs to the G-protein coupled receptor 2 family. In terms of assembly, interacts with ADCYAP1/PACAP (via N-terminal extracellular domain); activated by PACAP27 and CAPAC38 neuropeptides. Interacts with VIP; the interaction results in VIPR1 activation. Expressed at high levels in the MIN6 cells, at moderate levels in pancreatic islets, insulin-secreting cells, lung, brain, stomach, and colon, and at low levels in the heart.

The protein localises to the cell membrane. Functionally, g protein-coupled receptor activated by the neuropeptides vasoactive intestinal peptide (VIP) and pituitary adenylate cyclase-activating polypeptide (ADCYAP1/PACAP). Binds VIP and both PACAP27 and PACAP38 bioactive peptides with the order of ligand affinity of VIP = PACAP38 &gt; PACAP27. Ligand binding causes a conformation change that triggers signaling via guanine nucleotide-binding proteins (G proteins) and modulates the activity of downstream effectors. Activates cAMP-dependent pathway. May be coupled to phospholipase C. The sequence is that of Vasoactive intestinal polypeptide receptor 2 from Mus musculus (Mouse).